The primary structure comprises 211 residues: Vascular-related unknown protein 1 (211 aa).

The segment covering 1–12 (MMDTFSCNSYEQ) has biased composition (polar residues). The tract at residues 1 to 40 (MMDTFSCNSYEQNHPHDDDIDIDAHDHDSHGGDHQEESGW) is disordered. A compositionally biased stretch (basic and acidic residues) spans 13–37 (NHPHDDDIDIDAHDHDSHGGDHQEE).

As to expression, expressed in vascular tissues of cotyledons, rosette leaves, sepals, petals, anther filaments. Expressed in roots, inflorescence stems and developing seeds.

It is found in the cytoplasm. It localises to the nucleus. In terms of biological role, involved in the regulation of xylem development and growth. May regulate secondary wall formation during vascular development by modulation of brassinosteroid, gibberellin and auxin hormone signaling pathways. This chain is Vascular-related unknown protein 1, found in Arabidopsis thaliana (Mouse-ear cress).